The primary structure comprises 303 residues: Trans-aconitate 2-methyltransferase (303 aa).

The interval 271–303 (EGSGGSGGSGGSAGSAGCAGSGGSVGPAGEAGR) is disordered. The segment covering 272–303 (GSGGSGGSGGSAGSAGCAGSGGSVGPAGEAGR) has biased composition (gly residues).

Belongs to the methyltransferase superfamily. Tam family.

It is found in the cytoplasm. It catalyses the reaction trans-aconitate + S-adenosyl-L-methionine = (E)-3-(methoxycarbonyl)pent-2-enedioate + S-adenosyl-L-homocysteine. In terms of biological role, catalyzes the S-adenosylmethionine monomethyl esterification of trans-aconitate. This Streptomyces coelicolor (strain ATCC BAA-471 / A3(2) / M145) protein is Trans-aconitate 2-methyltransferase.